A 276-amino-acid chain; its full sequence is ATP synthase subunit a (276 aa).

7 consecutive transmembrane segments (helical) span residues 49 to 69, 109 to 129, 137 to 157, 173 to 193, 203 to 223, 232 to 252, and 253 to 273; these read KPML…FAAA, YLFT…IPFI, SGMV…AGIS, GIRG…NILV, FANM…GEYI, APVG…EMLI, and QFLQ…GAVA.

This sequence belongs to the ATPase A chain family. F-type ATPases have 2 components, CF(1) - the catalytic core - and CF(0) - the membrane proton channel. CF(1) has five subunits: alpha(3), beta(3), gamma(1), delta(1), epsilon(1). CF(0) has three main subunits: a(1), b(2) and c(9-12). The alpha and beta chains form an alternating ring which encloses part of the gamma chain. CF(1) is attached to CF(0) by a central stalk formed by the gamma and epsilon chains, while a peripheral stalk is formed by the delta and b chains.

Its subcellular location is the cell membrane. In terms of biological role, key component of the proton channel; it plays a direct role in the translocation of protons across the membrane. The polypeptide is ATP synthase subunit a (Nocardioides sp. (strain ATCC BAA-499 / JS614)).